The chain runs to 192 residues: 3-isopropylmalate dehydratase small subunit (192 aa).

This sequence belongs to the LeuD family. LeuD type 1 subfamily. In terms of assembly, heterodimer of LeuC and LeuD.

It carries out the reaction (2R,3S)-3-isopropylmalate = (2S)-2-isopropylmalate. It participates in amino-acid biosynthesis; L-leucine biosynthesis; L-leucine from 3-methyl-2-oxobutanoate: step 2/4. Catalyzes the isomerization between 2-isopropylmalate and 3-isopropylmalate, via the formation of 2-isopropylmaleate. The protein is 3-isopropylmalate dehydratase small subunit of Zymomonas mobilis subsp. mobilis (strain ATCC 31821 / ZM4 / CP4).